Consider the following 94-residue polypeptide: Co-chaperonin GroES (94 aa).

It belongs to the GroES chaperonin family. Heptamer of 7 subunits arranged in a ring. Interacts with the chaperonin GroEL.

It localises to the cytoplasm. Its function is as follows. Together with the chaperonin GroEL, plays an essential role in assisting protein folding. The GroEL-GroES system forms a nano-cage that allows encapsulation of the non-native substrate proteins and provides a physical environment optimized to promote and accelerate protein folding. GroES binds to the apical surface of the GroEL ring, thereby capping the opening of the GroEL channel. The sequence is that of Co-chaperonin GroES from Staphylococcus carnosus (strain TM300).